We begin with the raw amino-acid sequence, 452 residues long: Cysteine--tRNA ligase (452 aa).

A Zn(2+)-binding site is contributed by Cys-27. The 'HIGH' region signature appears at 29–39 (PTVQDHFHIGH). Residues Asp-207, His-232, and Glu-236 each contribute to the Zn(2+) site. The short motif at 265 to 269 (KMSKS) is the 'KMSKS' region element. Position 268 (Lys-268) interacts with ATP.

This sequence belongs to the class-I aminoacyl-tRNA synthetase family. Zn(2+) serves as cofactor.

It is found in the cytoplasm. It carries out the reaction tRNA(Cys) + L-cysteine + ATP = L-cysteinyl-tRNA(Cys) + AMP + diphosphate. This Thermoplasma acidophilum (strain ATCC 25905 / DSM 1728 / JCM 9062 / NBRC 15155 / AMRC-C165) protein is Cysteine--tRNA ligase.